The primary structure comprises 55 residues: Large ribosomal subunit protein bL32 (55 aa).

A compositionally biased stretch (basic residues) spans 1-23 (MAVPKKKTSKAKRDQRRAHWKRK). Residues 1–26 (MAVPKKKTSKAKRDQRRAHWKRKATI) form a disordered region.

It belongs to the bacterial ribosomal protein bL32 family.

The protein is Large ribosomal subunit protein bL32 of Picosynechococcus sp. (strain ATCC 27264 / PCC 7002 / PR-6) (Agmenellum quadruplicatum).